The following is a 200-amino-acid chain: Small ribosomal subunit protein uS4 (200 aa).

One can recognise an S4 RNA-binding domain in the interval 92–155 (SRLDAVVYSL…QNLDIIKESV (64 aa)).

The protein belongs to the universal ribosomal protein uS4 family. As to quaternary structure, part of the 30S ribosomal subunit. Contacts protein S5. The interaction surface between S4 and S5 is involved in control of translational fidelity.

Functionally, one of the primary rRNA binding proteins, it binds directly to 16S rRNA where it nucleates assembly of the body of the 30S subunit. With S5 and S12 plays an important role in translational accuracy. The protein is Small ribosomal subunit protein uS4 of Staphylococcus haemolyticus (strain JCSC1435).